The following is a 204-amino-acid chain: Inner membrane-spanning protein YciB (204 aa).

Helical transmembrane passes span 48 to 68, 73 to 93, 102 to 122, 147 to 167, and 170 to 190; these read ILFA…LYFF, FESM…ATLM, WKPT…QLFT, GAWI…AYAF, and AVWV…FVVG.

Belongs to the YciB family.

Its subcellular location is the cell inner membrane. Its function is as follows. Plays a role in cell envelope biogenesis, maintenance of cell envelope integrity and membrane homeostasis. The protein is Inner membrane-spanning protein YciB of Nitrosococcus oceani (strain ATCC 19707 / BCRC 17464 / JCM 30415 / NCIMB 11848 / C-107).